The chain runs to 510 residues: Maturase K (510 aa).

The protein belongs to the intron maturase 2 family. MatK subfamily.

Its subcellular location is the plastid. Its function is as follows. Usually encoded in the trnK tRNA gene intron. Probably assists in splicing its own and other chloroplast group II introns. The chain is Maturase K from Bartsia alpina (Velvet bells).